A 268-amino-acid chain; its full sequence is Lipopolysaccharide core heptose(I) kinase WaaP (268 aa).

Phosphotyrosine; by autocatalysis occurs at positions 30, 48, and 98. The active site involves Asp-163. Residues Tyr-165, Tyr-211, Tyr-231, Tyr-258, and Tyr-264 each carry the phosphotyrosine; by autocatalysis modification.

It belongs to the protein kinase superfamily. KdkA/RfaP family. In terms of assembly, interacts with acyl-AcpP. The WaaP hydrophobic channel can accommodate acyl chains of different lengths, but myristyl-ACP is likely its physiological binding partner. The cofactor is Mg(2+).

Its subcellular location is the cytoplasm. It carries out the reaction an L-alpha-D-Hep-(1-&gt;3)-L-alpha-D-Hep-(1-&gt;5)-[alpha-Kdo-(2-&gt;4)]-alpha-Kdo-(2-&gt;6)-lipid A + ATP = an L-alpha-D-Hep-(1-&gt;3)-4-O-phospho-L-alpha-D-Hep-(1-&gt;5)-[alpha-Kdo-(2-&gt;4)]-alpha-Kdo-(2-&gt;6)-lipid A + ADP + H(+). It catalyses the reaction L-tyrosyl-[protein] + ATP = O-phospho-L-tyrosyl-[protein] + ADP + H(+). The protein operates within bacterial outer membrane biogenesis; LPS core biosynthesis. Acylated-acyl carrier protein (acyl-ACP) acts as a very tightly bound cofactor necessary for the production and stability of active WaaP kinase. In terms of biological role, kinase involved in the biosynthesis of the core oligosaccharide region of lipopolysaccharide (LPS). Catalyzes the phosphorylation of heptose I (HepI), the first heptose added to the Kdo2-lipid A module. Also has protein-tyrosine kinase activity: autophosphorylates on all Tyr residues; in vitro can phosphorylate poly(Glu,Tyr). This Pseudomonas aeruginosa (strain ATCC 15692 / DSM 22644 / CIP 104116 / JCM 14847 / LMG 12228 / 1C / PRS 101 / PAO1) protein is Lipopolysaccharide core heptose(I) kinase WaaP.